The chain runs to 160 residues: Cytochrome b6-f complex subunit 4 (160 aa).

3 helical membrane-spanning segments follow: residues 36 to 56 (ILYM…GLSI), 95 to 115 (LVGV…PFIE), and 127 to 147 (PIAT…GIGA).

Belongs to the cytochrome b family. PetD subfamily. The 4 large subunits of the cytochrome b6-f complex are cytochrome b6, subunit IV (17 kDa polypeptide, petD), cytochrome f and the Rieske protein, while the 4 small subunits are petG, petL, petM and petN. The complex functions as a dimer.

It is found in the plastid. The protein resides in the chloroplast thylakoid membrane. Its function is as follows. Component of the cytochrome b6-f complex, which mediates electron transfer between photosystem II (PSII) and photosystem I (PSI), cyclic electron flow around PSI, and state transitions. The polypeptide is Cytochrome b6-f complex subunit 4 (Gracilaria tenuistipitata var. liui (Red alga)).